Reading from the N-terminus, the 364-residue chain is GTPase Obg (364 aa).

The Obg domain maps to 1-159; it reads MKFIDEARIE…RNLRLELKVL (159 aa). Residues 128-147 form a disordered region; the sequence is IHFKSSTNRAPRQKTDGKAG. The 175-residue stretch at 160–334 folds into the OBG-type G domain; the sequence is ADVGLLGMPN…LVHAIQEYLD (175 aa). GTP is bound by residues 166 to 173, 191 to 195, 213 to 216, 284 to 287, and 315 to 317; these read GMPNAGKS, FTTLH, DIPG, NKLD, and SAL. Mg(2+) contacts are provided by S173 and T193. The tract at residues 340–364 is disordered; sequence EDAAAAAPDQRLDPTLHNVDHDDQA. Over residues 349 to 364 the composition is skewed to basic and acidic residues; the sequence is QRLDPTLHNVDHDDQA.

It belongs to the TRAFAC class OBG-HflX-like GTPase superfamily. OBG GTPase family. In terms of assembly, monomer. Mg(2+) serves as cofactor.

The protein localises to the cytoplasm. Its function is as follows. An essential GTPase which binds GTP, GDP and possibly (p)ppGpp with moderate affinity, with high nucleotide exchange rates and a fairly low GTP hydrolysis rate. Plays a role in control of the cell cycle, stress response, ribosome biogenesis and in those bacteria that undergo differentiation, in morphogenesis control. The polypeptide is GTPase Obg (Ralstonia pickettii (strain 12J)).